A 117-amino-acid polypeptide reads, in one-letter code: Large ribosomal subunit protein bL19 (117 aa).

The protein belongs to the bacterial ribosomal protein bL19 family.

In terms of biological role, this protein is located at the 30S-50S ribosomal subunit interface and may play a role in the structure and function of the aminoacyl-tRNA binding site. The chain is Large ribosomal subunit protein bL19 from Micrococcus luteus (strain ATCC 4698 / DSM 20030 / JCM 1464 / CCM 169 / CCUG 5858 / IAM 1056 / NBRC 3333 / NCIMB 9278 / NCTC 2665 / VKM Ac-2230) (Micrococcus lysodeikticus).